The primary structure comprises 447 residues: Trimethylamine monooxygenase (447 aa).

Residues Ser13, Glu38, Gln40, Leu46, Trp47, and His63 each contribute to the FAD site. Trp71 and Asn73 together coordinate NADP(+). 2 residues coordinate FAD: Asn73 and Val126. Positions 173, 205, 206, 208, and 229 each coordinate NADP(+). Gln318 and Thr321 together coordinate FAD. Residue Arg413 participates in NADP(+) binding.

This sequence belongs to the FMO family. FAD is required as a cofactor.

It catalyses the reaction trimethylamine + NADPH + O2 = trimethylamine N-oxide + NADP(+) + H2O. Functionally, catalyzes the oxidation of trimethylamine (TMA) to produce trimethylamine N-oxide (TMAO). TMA is the best substrate, but the enzyme can also oxidize methimazole, indole and dimethylamine (DMA). This chain is Trimethylamine monooxygenase, found in Roseovarius nubinhibens (strain ATCC BAA-591 / DSM 15170 / ISM).